Here is a 234-residue protein sequence, read N- to C-terminus: 3-deoxy-manno-octulosonate cytidylyltransferase (234 aa).

This sequence belongs to the KdsB family.

It localises to the cytoplasm. The catalysed reaction is 3-deoxy-alpha-D-manno-oct-2-ulosonate + CTP = CMP-3-deoxy-beta-D-manno-octulosonate + diphosphate. It participates in nucleotide-sugar biosynthesis; CMP-3-deoxy-D-manno-octulosonate biosynthesis; CMP-3-deoxy-D-manno-octulosonate from 3-deoxy-D-manno-octulosonate and CTP: step 1/1. It functions in the pathway bacterial outer membrane biogenesis; lipopolysaccharide biosynthesis. Activates KDO (a required 8-carbon sugar) for incorporation into bacterial lipopolysaccharide in Gram-negative bacteria. The protein is 3-deoxy-manno-octulosonate cytidylyltransferase of Aquifex aeolicus (strain VF5).